The sequence spans 374 residues: MTTSASSHLNKGIKQVYMSLPQGEKVQAMYIWIDGTGEGLRCKTRTLDSEPKCVEELPEWNFDGSSTLQSEGSNSDMYLVPAAMFRDPFRKDPNKLVLCESFQVQFEGPAETNLRHTCKRIMDMVSNQHPWFGMEQEYTLMGTDGHPFGWPSNGFPGPQGPYYCGVGADRAYGRDIVEAHYRACLYAGVKIAGTNAEVMPAQWEFQIGPCEGISMGDHLWVARFILHRVCEDFGVIATFDPKPIPGNWNGAGCHTNFSTKAMREENGLKYIEEAIEKLSKRHQYHIRAYDPKGGLDNARRLTGFHETSNINDFSAGVANRSASIRIPRTVGQEKKGYFEDRRPSANCDPFSVTEALIRTCLLNETGDEPFQYKN.

Residues 2–25 (TTSASSHLNKGIKQVYMSLPQGEK) form a required for glutamine-induced ubiquitination by CRL4(CRBN) and proteasomal degradation region. N6-acetyllysine is present on residues K11 and K14. The GS beta-grasp domain maps to 24–106 (EKVQAMYIWI…VLCESFQVQF (83 aa)). The GS catalytic domain occupies 114–374 (LRHTCKRIMD…TGDEPFQYKN (261 aa)). E135 provides a ligand contact to ATP. The Mn(2+) site is built by E135, E137, E197, and E204. An ATP-binding site is contributed by 204-209 (EFQIGP). An L-glutamate-binding site is contributed by 247–248 (NW). Position 254 (H254) interacts with Mn(2+). ATP is bound by residues 256-258 (NFS), R320, and R325. Residue R320 participates in L-glutamate binding. 337 to 339 (YFE) lines the ADP pocket. E339 provides a ligand contact to Mn(2+). R341 lines the L-glutamate pocket. S344 carries the post-translational modification Phosphoserine.

It belongs to the glutamine synthetase family. As to quaternary structure, decamer; composed of two pentamers. Interacts with PALMD. Interacts with RHOJ. Interacts with BEST2; this interaction tethers a fraction of GLUL to the membrane, causing a decrease of cytosolic glutamine synthase (GS) activity and inhibits the chloride channel activity of BEST2 by affecting the gating at the aperture in the absence of intracellular glutamate. Mg(2+) is required as a cofactor. Mn(2+) serves as cofactor. Palmitoylated; undergoes autopalmitoylation. In terms of processing, acetylated by EP300/p300; acetylation is stimulated by increased glutamine levels and promotes ubiquitin-mediated proteasomal degradation. Post-translationally, ubiquitinated by ZNRF1. Ubiquitinated by the DCX (DDB1-CUL4-X-box) E3 ubiquitin-protein ligase complex called CRL4(CRBN), leading to proteasomal degradation.

The protein localises to the cytoplasm. It localises to the cytosol. The protein resides in the microsome. It is found in the mitochondrion. Its subcellular location is the cell membrane. The catalysed reaction is L-glutamate + NH4(+) + ATP = L-glutamine + ADP + phosphate + H(+). It carries out the reaction L-cysteinyl-[protein] + hexadecanoyl-CoA = S-hexadecanoyl-L-cysteinyl-[protein] + CoA. Its activity is regulated as follows. Glutamine synthetase activity is inhibited by methionine sulfoximine (MSO). Its function is as follows. Glutamine synthetase that catalyzes the ATP-dependent conversion of glutamate and ammonia to glutamine. Its role depends on tissue localization: in the brain, it regulates the levels of toxic ammonia and converts neurotoxic glutamate to harmless glutamine, whereas in the liver, it is one of the enzymes responsible for the removal of ammonia. Plays a key role in ammonium detoxification during erythropoiesis: the glutamine synthetase activity is required to remove ammonium generated by porphobilinogen deaminase (HMBS) during heme biosynthesis to prevent ammonium accumulation and oxidative stress. Essential for proliferation of fetal skin fibroblasts. Independently of its glutamine synthetase activity, required for endothelial cell migration during vascular development. Involved in angiogenesis by regulating membrane localization and activation of the GTPase RHOJ, possibly by promoting RHOJ palmitoylation. May act as a palmitoyltransferase for RHOJ: able to autopalmitoylate and then transfer the palmitoyl group to RHOJ. Plays a role in ribosomal 40S subunit biogenesis. Through the interaction with BEST2, inhibits BEST2 channel activity by affecting the gating at the aperture in the absence of intracellular L-glutamate, but sensitizes BEST2 to intracellular L-glutamate, which promotes the opening of BEST2 and thus relieves its inhibitory effect on BEST2. This is Glutamine synthetase from Macaca fascicularis (Crab-eating macaque).